We begin with the raw amino-acid sequence, 298 residues long: UDP-N-acetylenolpyruvoylglucosamine reductase (298 aa).

In terms of domain architecture, FAD-binding PCMH-type spans lysine 26–glutamate 191. Arginine 170 is an active-site residue. Residue serine 220 is the Proton donor of the active site. Residue glutamate 290 is part of the active site.

This sequence belongs to the MurB family. It depends on FAD as a cofactor.

It is found in the cytoplasm. It catalyses the reaction UDP-N-acetyl-alpha-D-muramate + NADP(+) = UDP-N-acetyl-3-O-(1-carboxyvinyl)-alpha-D-glucosamine + NADPH + H(+). Its pathway is cell wall biogenesis; peptidoglycan biosynthesis. Functionally, cell wall formation. This chain is UDP-N-acetylenolpyruvoylglucosamine reductase, found in Listeria monocytogenes serotype 4b (strain CLIP80459).